We begin with the raw amino-acid sequence, 163 residues long: Nucleotide-binding protein HAPS_2236 (163 aa).

It belongs to the YajQ family.

Its function is as follows. Nucleotide-binding protein. The chain is Nucleotide-binding protein HAPS_2236 from Glaesserella parasuis serovar 5 (strain SH0165) (Haemophilus parasuis).